The sequence spans 236 residues: Cytochrome b-c1 complex subunit Rieske-4, mitochondrial (236 aa).

The N-terminal 24 residues, 1–24 (MINFGSCWGLASVTSNSFSIISGF), are a transit peptide targeting the mitochondrion. Residues 25–73 (SSNSVSHAHDMGLVPDLPPTVAAIKNPTSKIVYDEHNHERYPPGDPSKR) lie on the Mitochondrial matrix side of the membrane. The helical transmembrane segment at 74–96 (AFAYFVLTGGRFVYASLVRLLIL) threads the bilayer. Residues 97–236 (KFVLSMSASK…FLEENKLLIG (140 aa)) lie on the Mitochondrial intermembrane side of the membrane. One can recognise a Rieske domain in the interval 146–234 (INLANSVDLG…YSFLEENKLL (89 aa)). Positions 179, 181, 198, and 201 each coordinate [2Fe-2S] cluster. Residues cysteine 184 and cysteine 200 are joined by a disulfide bond.

Belongs to the Rieske iron-sulfur protein family. As to quaternary structure, component of the ubiquinol-cytochrome c oxidoreductase (cytochrome b-c1 complex, complex III, CIII), a multisubunit enzyme composed of 3 respiratory subunits cytochrome b, cytochrome c1 and Rieske protein, 2 core protein subunits, and several low-molecular weight protein subunits. The complex exists as an obligatory dimer and forms supercomplexes (SCs) in the inner mitochondrial membrane with cytochrome c oxidase (complex IV, CIV). The cofactor is [2Fe-2S] cluster.

It is found in the mitochondrion inner membrane. It catalyses the reaction a quinol + 2 Fe(III)-[cytochrome c](out) = a quinone + 2 Fe(II)-[cytochrome c](out) + 2 H(+)(out). Functionally, component of the ubiquinol-cytochrome c oxidoreductase, a multisubunit transmembrane complex that is part of the mitochondrial electron transport chain which drives oxidative phosphorylation. The respiratory chain contains 3 multisubunit complexes succinate dehydrogenase (complex II, CII), ubiquinol-cytochrome c oxidoreductase (cytochrome b-c1 complex, complex III, CIII) and cytochrome c oxidase (complex IV, CIV), that cooperate to transfer electrons derived from NADH and succinate to molecular oxygen, creating an electrochemical gradient over the inner membrane that drives transmembrane transport and the ATP synthase. The cytochrome b-c1 complex catalyzes electron transfer from ubiquinol to cytochrome c, linking this redox reaction to translocation of protons across the mitochondrial inner membrane, with protons being carried across the membrane as hydrogens on the quinol. In the process called Q cycle, 2 protons are consumed from the matrix, 4 protons are released into the intermembrane space and 2 electrons are passed to cytochrome c. The Rieske protein is a catalytic core subunit containing a [2Fe-2S] iron-sulfur cluster. It cycles between 2 conformational states during catalysis to transfer electrons from the quinol bound in the Q(0) site in cytochrome b to cytochrome c1. This is Cytochrome b-c1 complex subunit Rieske-4, mitochondrial from Nicotiana tabacum (Common tobacco).